Reading from the N-terminus, the 657-residue chain is Glycogen debranching enzyme (657 aa).

D336 acts as the Nucleophile in catalysis. E371 acts as the Proton donor in catalysis. Residues 460–479 (ANGEENRDGTNNNYSNNHGK) are disordered.

Belongs to the glycosyl hydrolase 13 family.

It carries out the reaction Hydrolysis of (1-&gt;6)-alpha-D-glucosidic linkages to branches with degrees of polymerization of three or four glucose residues in limit dextrin.. The protein operates within glycan degradation; glycogen degradation. Functionally, removes maltotriose and maltotetraose chains that are attached by 1,6-alpha-linkage to the limit dextrin main chain, generating a debranched limit dextrin. In Escherichia coli O17:K52:H18 (strain UMN026 / ExPEC), this protein is Glycogen debranching enzyme.